We begin with the raw amino-acid sequence, 193 residues long: Hydroxyacylglutathione hydrolase-like protein (193 aa).

Positions 54, 56, 58, 59, and 110 each coordinate Zn(2+).

The protein belongs to the metallo-beta-lactamase superfamily. Glyoxalase II family. The cofactor is Zn(2+).

Functionally, hydrolase acting on ester bonds. In Bos taurus (Bovine), this protein is Hydroxyacylglutathione hydrolase-like protein (HAGHL).